Consider the following 30-residue polypeptide: Cycloviolacin-O24 (30 aa).

A cross-link (cyclopeptide (Gly-Asn)) is located at residues 1–30 (GLPTCGETCFGGTCNTPGCTCDPWPVCTHN). 3 disulfide bridges follow: Cys5/Cys19, Cys9/Cys21, and Cys14/Cys27.

Post-translationally, this is a cyclic peptide. As to expression, expressed in leaves but not in petals, petioles, roots and runners (at protein level).

Its function is as follows. Probably participates in a plant defense mechanism. Has hemolytic activity. The protein is Cycloviolacin-O24 of Viola odorata (Sweet violet).